The primary structure comprises 367 residues: Succinyl-diaminopimelate desuccinylase (367 aa).

His64 is a Zn(2+) binding site. The active site involves Asp66. Asp95 provides a ligand contact to Zn(2+). Residue Glu125 is the Proton acceptor of the active site. Positions 126, 154, and 339 each coordinate Zn(2+).

Belongs to the peptidase M20A family. DapE subfamily. Homodimer. The cofactor is Zn(2+). It depends on Co(2+) as a cofactor.

It catalyses the reaction N-succinyl-(2S,6S)-2,6-diaminopimelate + H2O = (2S,6S)-2,6-diaminopimelate + succinate. It participates in amino-acid biosynthesis; L-lysine biosynthesis via DAP pathway; LL-2,6-diaminopimelate from (S)-tetrahydrodipicolinate (succinylase route): step 3/3. Its function is as follows. Catalyzes the hydrolysis of N-succinyl-L,L-diaminopimelic acid (SDAP), forming succinate and LL-2,6-diaminopimelate (DAP), an intermediate involved in the bacterial biosynthesis of lysine and meso-diaminopimelic acid, an essential component of bacterial cell walls. The chain is Succinyl-diaminopimelate desuccinylase from Sulfurovum sp. (strain NBC37-1).